The primary structure comprises 414 residues: Histidine--tRNA ligase (414 aa).

Belongs to the class-II aminoacyl-tRNA synthetase family. Homodimer.

It localises to the cytoplasm. The catalysed reaction is tRNA(His) + L-histidine + ATP = L-histidyl-tRNA(His) + AMP + diphosphate + H(+). This is Histidine--tRNA ligase from Rickettsia africae (strain ESF-5).